Reading from the N-terminus, the 2797-residue chain is Nonribosomal peptide synthetase penN (2797 aa).

The interval 239–625 is adenylation 1; that stretch reads SRPDHPAICA…ARKDSQVKIR (387 aa). The 74-residue stretch at 751–824 folds into the Carrier 1 domain; the sequence is TDTERHVHRF…DIVSLVRTAT (74 aa). At S785 the chain carries O-(pantetheine 4'-phosphoryl)serine. Positions 830 to 856 are disordered; that stretch reads PSAGAEISRSDAPTESPATGSFEGSGY. Residues 870 to 1299 form a condensation 1 region; it reads QSFSQARMWF…DIEIGSLLLT (430 aa). The interval 1328–1731 is adenylation 2; that stretch reads FHQQVAAHGD…GRMDQQVKIR (404 aa). Residues 1857 to 1953 form a methyltransferase region; the sequence is LEIGTGTGMI…VIKQLIQLHD (97 aa). In terms of domain architecture, Carrier 2 spans 2277–2351; the sequence is SFTDDIERAM…RLAGRVRGFR (75 aa). S2311 bears the O-(pantetheine 4'-phosphoryl)serine mark. Positions 2516–2658 are condensation 2; that stretch reads YDGISLSSIL…VNRTLIRVQL (143 aa).

It belongs to the NRP synthetase family.

The catalysed reaction is O-methyl-L-tyrosine + anthranilate + S-adenosyl-L-methionine + 2 ATP = (-)-4'-methoxycyclopeptine + 2 AMP + S-adenosyl-L-homocysteine + 2 diphosphate + 2 H(+). It carries out the reaction anthranilate + L-phenylalanine + S-adenosyl-L-methionine + 2 ATP = cyclopeptine + 2 AMP + S-adenosyl-L-homocysteine + 2 diphosphate + 2 H(+). The protein operates within secondary metabolite biosynthesis. Its pathway is alkaloid biosynthesis. It functions in the pathway mycotoxin biosynthesis. Functionally, nonribosomal peptide synthetase; part of the gene cluster that mediates the biosynthesis of penigequinolones, potent insecticidal alkaloids that contain a highly modified 10-carbon prenyl group. The first stage is catalyzed by the nonribosomal peptide synthetase penN that condenses anthranilic acid and O-methyl-L-tyrosine to produce 4'-methoxycyclopeptin. 4'-methoxycyclopeptin is then converted to 4'-methoxydehydrocyclopeptin by the ketoglutarate-dependent dioxygenase penM through dehydrogenation to form a double bond between C-alpha and C-beta of the O-methyltyrosine side chain. PenM also converts its first product methoxydehydrocyclopeptin to 4'-methoxycyclopenin. The following conversion of 4'methoxycyclopenin into 4'-methoxyviridicatin is catalyzed by the cyclopenase penL. 4'-methoxyviridicatin is the precursor of quinolone natural products, and is further converted to quinolinone B. The prenyltransferase penI then catalyzes the canonical Friedel-Crafts alkylation of quinolinone B with dimethylallyl cation to yield dimethylallyl quinolone, which is subjected to FAD-dependent dehydrogenation by the FAD-linked oxidoreductase penH to yield conjugated aryl diene. The delta(3') double bond then serves as the site of the second alkylation with DMAPP catalyzed by the prenyltransferase penG to yield a carbenium ion intermediate, which can be attacked by H(2)O to yield a styrenyl quinolone containing a C3'-hydroxyprenyl chain, or undergo cyclization to yield yaequinolones J1 and J2. The conversion of the styrenyl quinolone into the tetrahydrofuran-containing yaequinolone C is performed by the FAD-dependent monooxygenase penE and involves epoxidation of the terminal C7'-C8' olefin, followed by epoxide ring opening initiated by the C3' hydroxyl group. The predicted cysteine hydrolase penJ acts as an epoxide hydrolase that enhances the rate of the 5-exo-tet cyclization step, increasing the yield of yaequinolone C. PenF catalyzes the cationic rearrangement of the epoxide formed by penE (before ring opening to produce yaequinolone C) into yaequinolone D. Finally, the short-chain dehydrogenase/reductase (SDR)-like reductase penD, catalyzes both the dehydration of yaequinolone D and the reduction of the resulting oxonium to yield penigequinolone. This Penicillium thymicola protein is Nonribosomal peptide synthetase penN.